A 660-amino-acid polypeptide reads, in one-letter code: Acetyl-coenzyme A synthetase (660 aa).

CoA contacts are provided by residues 197–200 and threonine 317; that span reads RGGK. ATP-binding positions include 397-399, 421-426, aspartate 512, and arginine 528; these read GEP and DTFWQT. Serine 536 is a binding site for CoA. Arginine 539 is a binding site for ATP. 2 residues coordinate Mg(2+): valine 550 and valine 555. The residue at position 625 (lysine 625) is an N6-acetyllysine.

Belongs to the ATP-dependent AMP-binding enzyme family. Mg(2+) is required as a cofactor. In terms of processing, acetylated. Deacetylation by the SIR2-homolog deacetylase activates the enzyme.

The catalysed reaction is acetate + ATP + CoA = acetyl-CoA + AMP + diphosphate. It participates in ketone degradation; acetoin degradation. Functionally, catalyzes the conversion of acetate into acetyl-CoA (AcCoA), an essential intermediate at the junction of anabolic and catabolic pathways. AcsA undergoes a two-step reaction. In the first half reaction, AcsA combines acetate with ATP to form acetyl-adenylate (AcAMP) intermediate. In the second half reaction, it can then transfer the acetyl group from AcAMP to the sulfhydryl group of CoA, forming the product AcCoA. Although acetate is the preferred substrate of AcsA, propionate is also used, but at a diminished rate compared with that of acetate. Fatty acids with more than three carbon atoms are usually not accepted as substrates by AcsA. This Cupriavidus necator (strain ATCC 17699 / DSM 428 / KCTC 22496 / NCIMB 10442 / H16 / Stanier 337) (Ralstonia eutropha) protein is Acetyl-coenzyme A synthetase.